We begin with the raw amino-acid sequence, 214 residues long: Phosphoenolpyruvate guanylyltransferase 2 (214 aa).

Phosphoenolpyruvate contacts are provided by Thr-135, Gly-150, and Ser-153.

Belongs to the CofC family.

It catalyses the reaction phosphoenolpyruvate + GTP + H(+) = enolpyruvoyl-2-diphospho-5'-guanosine + diphosphate. It functions in the pathway cofactor biosynthesis; coenzyme F420 biosynthesis. In terms of biological role, guanylyltransferase that catalyzes the activation of phosphoenolpyruvate (PEP) as enolpyruvoyl-2-diphospho-5'-guanosine, via the condensation of PEP with GTP. It is involved in the biosynthesis of coenzyme F420, a hydride carrier cofactor. This Rhodococcus jostii (strain RHA1) protein is Phosphoenolpyruvate guanylyltransferase 2.